Reading from the N-terminus, the 332-residue chain is Anthranilate phosphoribosyltransferase (332 aa).

5-phospho-alpha-D-ribose 1-diphosphate contacts are provided by residues Gly-79, 82 to 83 (GD), Thr-87, 89 to 92 (NIST), 107 to 115 (KHGNYGATS), and Ala-119. Gly-79 contacts anthranilate. Ser-91 serves as a coordination point for Mg(2+). Asn-110 lines the anthranilate pocket. Arg-165 provides a ligand contact to anthranilate. Residues Asp-223 and Glu-224 each contribute to the Mg(2+) site.

Belongs to the anthranilate phosphoribosyltransferase family. In terms of assembly, homodimer. Mg(2+) is required as a cofactor.

It catalyses the reaction N-(5-phospho-beta-D-ribosyl)anthranilate + diphosphate = 5-phospho-alpha-D-ribose 1-diphosphate + anthranilate. It functions in the pathway amino-acid biosynthesis; L-tryptophan biosynthesis; L-tryptophan from chorismate: step 2/5. In terms of biological role, catalyzes the transfer of the phosphoribosyl group of 5-phosphorylribose-1-pyrophosphate (PRPP) to anthranilate to yield N-(5'-phosphoribosyl)-anthranilate (PRA). In Bacteroides thetaiotaomicron (strain ATCC 29148 / DSM 2079 / JCM 5827 / CCUG 10774 / NCTC 10582 / VPI-5482 / E50), this protein is Anthranilate phosphoribosyltransferase.